A 396-amino-acid chain; its full sequence is Zinc metalloproteinase nas-24 (396 aa).

The first 20 residues, 1–20 (MTRVVHIIGAAFLLSSYAYC), serve as a signal peptide directing secretion. One can recognise a Peptidase M12A domain in the interval 44-230 (ERLGSKWLGG…YKINQYYGCG (187 aa)). N63 and N79 each carry an N-linked (GlcNAc...) asparagine glycan. 4 disulfide bridges follow: C82–C229, C105–C129, C231–C251, and C253–C262. H137 provides a ligand contact to Zn(2+). E138 is an active-site residue. The Zn(2+) site is built by H141 and H147. The EGF-like domain maps to 224 to 263 (NQYYGCGCSTQLECKNGGYTSPSDCSRCNCPKGFFGKLCN). N310 carries an N-linked (GlcNAc...) asparagine glycan.

It depends on Zn(2+) as a cofactor.

The protein localises to the secreted. In terms of biological role, metalloprotease. The sequence is that of Zinc metalloproteinase nas-24 (nas-24) from Caenorhabditis elegans.